The primary structure comprises 484 residues: MNNNITNSIAQLFFNTSFFAFLFLIIIAFNLCLFAYLYFQYRIYKKNPKKANNFKANEYEKIKLLKNQNFTESNKLIATTNELNELTSQLDNILVRIINKPLAKLVNDFLDEQIKQIVKLDKNSSDFHSESDNLPFYTKLFNDFHFGVDKLININIKNPLYNWVYSPSFLISESDFRKLNGISGINKKLLVEKLRIEDIVFTDLNKKYEVNVLTESPIKAQKTVLTVRNILMNDYVDNERIESYVQQANFFFTEHCKKIGKEILESLNIFISSSSLHRHFGFLAFRYSFGQNVLSHSLETAFLTAHLAALIELDSELSLKCGLLHDIGKSNDDNGKESHTITGAKLAEQFQLPDDIKYTIANHHNKHIDNTYCRLTQIADKLSAARIGARSDSSLLFKQLKDELKKIVDKTINNFHTTILLGQSGRRLMIWLETKNQNQLLSNEQIIEMVEKIKAEIAKNPITNHFPIKVVIRYNFEHSFNTKS.

A helical transmembrane segment spans residues 18-38; that stretch reads FFAFLFLIIIAFNLCLFAYLY. In terms of domain architecture, KH spans 166 to 234; sequence SPSFLISESD…LTVRNILMND (69 aa). The HD domain occupies 293-385; it reads VLSHSLETAF…TQIADKLSAA (93 aa).

Belongs to the RNase Y family.

It localises to the cell membrane. Its function is as follows. Endoribonuclease that initiates mRNA decay. In Mycoplasma genitalium (strain ATCC 33530 / DSM 19775 / NCTC 10195 / G37) (Mycoplasmoides genitalium), this protein is Ribonuclease Y.